The following is a 325-amino-acid chain: DNA-directed RNA polymerase subunit alpha (325 aa).

The alpha N-terminal domain (alpha-NTD) stretch occupies residues 1–231 (MQNSLLKPRI…DQLNVFAALE (231 aa)). Residues 246 to 325 (VDPILLRPVD…ENWPPAGLEK (80 aa)) form an alpha C-terminal domain (alpha-CTD) region.

The protein belongs to the RNA polymerase alpha chain family. As to quaternary structure, homodimer. The RNAP catalytic core consists of 2 alpha, 1 beta, 1 beta' and 1 omega subunit. When a sigma factor is associated with the core the holoenzyme is formed, which can initiate transcription.

It catalyses the reaction RNA(n) + a ribonucleoside 5'-triphosphate = RNA(n+1) + diphosphate. In terms of biological role, DNA-dependent RNA polymerase catalyzes the transcription of DNA into RNA using the four ribonucleoside triphosphates as substrates. This Janthinobacterium sp. (strain Marseille) (Minibacterium massiliensis) protein is DNA-directed RNA polymerase subunit alpha.